Consider the following 325-residue polypeptide: SPbeta prophage-derived uncharacterized protein YopR (325 aa).

The polypeptide is SPbeta prophage-derived uncharacterized protein YopR (yopR) (Bacillus subtilis (strain 168)).